The primary structure comprises 1022 residues: Collagen alpha-1(I) chain (1022 aa).

Positions 1–1022 (SAGGISVPGP…PGPPGPPGPP (1022 aa)) are disordered. 11 positions are modified to 4-hydroxyproline: P20, P23, P26, P35, P38, P41, P56, P71, P77, P86, and P92. The span at 28–47 (PQGFQGPPGEPGEPGASGPM) shows a compositional bias: low complexity. Residues 59–73 (NGDDGEAGKPGRPGE) are compositionally biased toward basic and acidic residues. K95 carries the 5-hydroxylysine; alternate modification. O-linked (Gal...) hydroxylysine; alternate glycosylation occurs at K95. The residue at position 101 (S101) is a Phosphoserine. Low complexity predominate over residues 109–125 (DAGPAGPKGEPGSPGEN). 16 positions are modified to 4-hydroxyproline: P119, P122, P128, P137, P143, P164, P173, P176, P203, P206, P218, P224, P233, P239, P242, and P257. Residues 143–161 (PGASGPAGARGNDGAAGAA) show a composition bias toward low complexity. Over residues 163–175 (PPGPTGPAGPPGF) the composition is skewed to pro residues. Positions 209–259 (AGAAGPAGNPGADGQPGAKGANGAPGIAGAPGFPGARGPSGPQGPSGAPGP) are enriched in low complexity. The residue at position 260 (K260) is a 5-hydroxylysine. 4-hydroxyproline is present on residues P266, P269, P281, P290, P305, P311, P320, and P326. A compositionally biased stretch (gly residues) spans 315 to 324 (GERGGPGSRG). A 5-hydroxylysine modification is found at K335. 4-hydroxyproline occurs at positions 344, 353, 359, 365, 374, 377, 386, 395, 401, 413, 422, 431, 434, 452, 470, 476, 482, 488, 494, 500, 512, 521, 533, 545, 548, 554, 560, and 569. A compositionally biased stretch (low complexity) spans 368–394 (KGLTGSPGSPGPDGKTGPPGPAGQDGR). A compositionally biased stretch (low complexity) spans 403–422 (ARGQAGVMGFPGPKGAAGEP). The segment covering 464–491 (QGPAGSPGFQGLPGPAGPPGEAGKPGEQ) has biased composition (low complexity). Positions 530 to 557 (NGAPGNDGAKGDAGAPGAPGSQGAPGLQ) are enriched in low complexity. Residue K581 is modified to 5-hydroxylysine. P587, P602, and P608 each carry 4-hydroxyproline. Residues 614 to 628 (SGPSGPAGPTGARGA) show a composition bias toward low complexity. S617 carries the phosphoserine modification. Residues P629, P635, P638, P647, P653, P671, P680, and P689 each carry the 4-hydroxyproline modification. The segment covering 641 to 668 (AGFAGPPGADGQPGAKGEPGDAGAKGDA) has biased composition (low complexity). The span at 670–682 (PPGPAGPTGPPGP) shows a compositional bias: pro residues. At K692 the chain carries 5-hydroxylysine. Low complexity predominate over residues 697–713 (SAGPPGATGFPGAAGRV). Residues P701 and P707 each carry the 4-hydroxyproline modification. P715 is modified (3-hydroxyproline). P716, P725, P728, P749, P758, P767, P776, P794, P803, P806, P812, P827, P833, P839, P848, and P854 each carry 4-hydroxyproline. Residues 742 to 751 (ETGPAGRPGE) show a composition bias toward low complexity. A compositionally biased stretch (low complexity) spans 761-776 (TGEKGSPGADGPAGAP). Over residues 826 to 836 (PPGPVGPPGLA) the composition is skewed to pro residues. Positions 838 to 853 (PPGESGREGSPGAEGS) are enriched in low complexity. K863 carries the post-translational modification 5-hydroxylysine. The segment covering 872 to 887 (AGPPGAPGAPGAPGPV) has biased composition (pro residues). 3 positions are modified to 4-hydroxyproline: P875, P878, and P881. Over residues 908–922 (AGPAGARGPAGPQGP) the composition is skewed to low complexity. The span at 923 to 937 (RGDKGETGEQGDRGI) shows a compositional bias: basic and acidic residues. K926 carries the 5-hydroxylysine modification. A 5-hydroxylysine; alternate modification is found at K938. The O-linked (Gal...) hydroxylysine; alternate glycan is linked to K938. 4-hydroxyproline is present on residues P953, P956, P974, and P989. Residues 956–989 (PGEQGPSGASGPAGPRGPPGSAGSPGKDGLNGLP) are compositionally biased toward low complexity. The residue at position 994 (P994) is a 3-hydroxyproline. At P995 the chain carries 4-hydroxyproline. Positions 1007–1022 (VGPPGPPGPPGPPGPP) are enriched in pro residues. P1009 carries the 3-hydroxyproline modification. P1010 bears the 4-hydroxyproline mark. Residue P1012 is modified to 3-hydroxyproline. P1013 carries the 4-hydroxyproline modification. P1015 is modified (3-hydroxyproline). Residues P1016, P1019, and P1022 each carry the 4-hydroxyproline modification.

Belongs to the fibrillar collagen family. In terms of assembly, trimers of one alpha 2(I) and two alpha 1(I) chains. Post-translationally, prolines at the third position of the tripeptide repeating unit (G-X-Y) are hydroxylated in some or all of the chains. Expressed in bone.

The protein resides in the secreted. It localises to the extracellular space. Its subcellular location is the extracellular matrix. Functionally, type I collagen is a member of group I collagen (fibrillar forming collagen). This Mylodon darwinii (Giant ground sloth) protein is Collagen alpha-1(I) chain.